The primary structure comprises 204 residues: Flavin-dependent thymidylate synthase (204 aa).

Positions 1 to 204 (MTVTLMQHTS…RYLFCLNQEG (204 aa)) constitute a ThyX domain. FAD is bound by residues Ser50 and 74-76 (RHR). DUMP is bound by residues 71 to 74 (ELAR), 84 to 86 (SSR), and Lys143. A ThyX motif motif is present at residues 74–84 (RHRIASLSVKS). Residues 159-161 (NAR) and Asn165 contribute to the FAD site. Arg170 contributes to the dUMP binding site. Catalysis depends on Arg170, which acts as the Involved in ionization of N3 of dUMP, leading to its activation.

The protein belongs to the thymidylate synthase ThyX family. As to quaternary structure, homotetramer. It depends on FAD as a cofactor.

It carries out the reaction dUMP + (6R)-5,10-methylene-5,6,7,8-tetrahydrofolate + NADPH + H(+) = dTMP + (6S)-5,6,7,8-tetrahydrofolate + NADP(+). Its pathway is pyrimidine metabolism; dTTP biosynthesis. Catalyzes the reductive methylation of 2'-deoxyuridine-5'-monophosphate (dUMP) to 2'-deoxythymidine-5'-monophosphate (dTMP) while utilizing 5,10-methylenetetrahydrofolate (mTHF) as the methyl donor, and NADPH and FADH(2) as the reductant. The chain is Flavin-dependent thymidylate synthase from Wolinella succinogenes (strain ATCC 29543 / DSM 1740 / CCUG 13145 / JCM 31913 / LMG 7466 / NCTC 11488 / FDC 602W) (Vibrio succinogenes).